The chain runs to 1013 residues: Alpha-2-macroglobulin homolog (1013 aa).

The disordered stretch occupies residues Ala-804 to Asn-844.

Belongs to the protease inhibitor I39 (alpha-2-macroglobulin) family. Bacterial alpha-2-macroglobulin subfamily.

The polypeptide is Alpha-2-macroglobulin homolog (Deinococcus radiodurans (strain ATCC 13939 / DSM 20539 / JCM 16871 / CCUG 27074 / LMG 4051 / NBRC 15346 / NCIMB 9279 / VKM B-1422 / R1)).